The chain runs to 105 residues: Large ribosomal subunit protein uL24 (105 aa).

This sequence belongs to the universal ribosomal protein uL24 family. As to quaternary structure, part of the 50S ribosomal subunit.

In terms of biological role, one of two assembly initiator proteins, it binds directly to the 5'-end of the 23S rRNA, where it nucleates assembly of the 50S subunit. Functionally, one of the proteins that surrounds the polypeptide exit tunnel on the outside of the subunit. In Clostridium botulinum (strain 657 / Type Ba4), this protein is Large ribosomal subunit protein uL24.